Reading from the N-terminus, the 367-residue chain is tRNA pseudouridine synthase D (367 aa).

D80 serves as the catalytic Nucleophile. The TRUD domain occupies 156–316 (GIPNWFGEQR…LKQERRALRL (161 aa)).

It belongs to the pseudouridine synthase TruD family.

The catalysed reaction is uridine(13) in tRNA = pseudouridine(13) in tRNA. Responsible for synthesis of pseudouridine from uracil-13 in transfer RNAs. This is tRNA pseudouridine synthase D from Xanthomonas campestris pv. campestris (strain 8004).